The primary structure comprises 485 residues: Regulatory protein ViaA (485 aa).

The protein belongs to the ViaA family. Homodimer. Interacts with RavA.

It localises to the cytoplasm. Its function is as follows. Component of the RavA-ViaA chaperone complex, which may act on the membrane to optimize the function of some of the respiratory chains. ViaA stimulates the ATPase activity of RavA. This chain is Regulatory protein ViaA, found in Proteus mirabilis (strain HI4320).